Here is a 626-residue protein sequence, read N- to C-terminus: MVKFAIINTLTVNETWAKLKSFGVMESSIEGSSESTTVTTSPSRRVRELLALCFSSVEEAGGFQDFESFVTELVSCLDSLYENVALDANNELENDVIEEVLDEILKVLSSPQMDQDVIDALSFHLPKVTSKFADISSRCLQLVEEIVDRFVEACNPRDMLSILCEALDAARCYHSASTCSTPLLHGLSKVFILIQRRHYEQLKVAVPIVLNVLKDISLETDVQVEDLFDKALGIASSIRDVSSKLNNEEEAKVRCLLCLYVIQITAIISVSIRDKAASCIPLVIQLEPFLTSCGLTHLGLITGNDTEKLMSTVAGDDDEFITSFPDISLGASLLFICAKISHEVAEAANAVLGSVVDELQNNPVKRWQAYGMLKYILSSGDLLWEFKRHAIEFLLDITKGVTSSQCNDEQIDCSDYTPGIYATLQAVTLLIMYAPDADLRKKTFEALKRVLSDIPAPHRFDVLRALVTNSRSPSMTAILLGLVKDSMSKSSLQDTDCAAVDTHVIELVELVLRPPQGGPPLLPDQSDAILAALNLYRFALLFESRECEAGKERSKVGSDILSKKNLEKAYKEWLLPLRTLVSCSIAENLKEDHGQESSLDDVGLLNPIELVLYRCIELVEEKLKSH.

Widely expressed. Expressed throughout the root tip, stele and lateral primordia. Also expressed in the shoots.

The protein localises to the nucleus. Functionally, required for the initiation of lateral roots independent from auxin signaling. May function in maintaining the pericycle in the mitotically competent state needed for lateral root formation. The polypeptide is Aberrant root formation protein 4 (ALF4) (Arabidopsis thaliana (Mouse-ear cress)).